The following is a 440-amino-acid chain: Polyprenol-phosphate-mannose-dependent alpha-(1-2)-phosphatidylinositol mannoside mannosyltransferase (440 aa).

11 helical membrane-spanning segments follow: residues 15-35, 87-107, 109-129, 144-161, 164-184, 193-213, 224-244, 281-301, 316-336, 360-380, and 395-415; these read LAPT…VLWV, LAAI…SSAI, ATTL…LDVW, AWLA…LEPI, NFEF…DCVP, LLLG…LYFL, TAAT…SDSV, PRFI…VWAA, APVL…PVSW, VWFT…PITL, and LAGG…GLVS. The tract at residues 419-440 is disordered; it reads THTGDAHETDEPLVPLARGEAG.

This sequence belongs to the glycosyltransferase 87 family.

Its subcellular location is the cell membrane. It functions in the pathway phospholipid metabolism; phosphatidylinositol metabolism. In terms of biological role, responsible for the addition of alpha-(1-2) mannose branches to the linear mannan core on the biosynthetic pathway to mature Lipoarabinomannan (LAM). The sequence is that of Polyprenol-phosphate-mannose-dependent alpha-(1-2)-phosphatidylinositol mannoside mannosyltransferase from Mycolicibacterium smegmatis (strain ATCC 700084 / mc(2)155) (Mycobacterium smegmatis).